A 555-amino-acid chain; its full sequence is Hydroxylamine reductase (555 aa).

4 residues coordinate [4Fe-4S] cluster: cysteine 3, cysteine 6, cysteine 18, and cysteine 25. Histidine 252, glutamate 276, cysteine 320, cysteine 407, cysteine 435, cysteine 460, glutamate 494, and lysine 496 together coordinate hybrid [4Fe-2O-2S] cluster. Residue cysteine 407 is modified to Cysteine persulfide.

It belongs to the HCP family. [4Fe-4S] cluster is required as a cofactor. Hybrid [4Fe-2O-2S] cluster serves as cofactor.

The protein localises to the cytoplasm. It carries out the reaction A + NH4(+) + H2O = hydroxylamine + AH2 + H(+). Functionally, catalyzes the reduction of hydroxylamine to form NH(3) and H(2)O. This is Hydroxylamine reductase from Burkholderia lata (strain ATCC 17760 / DSM 23089 / LMG 22485 / NCIMB 9086 / R18194 / 383).